Reading from the N-terminus, the 62-residue chain is Large ribosomal subunit protein bL32 (62 aa).

The span at M1–R16 shows a compositional bias: basic residues. Positions M1–A62 are disordered. Residues V28 to L44 are compositionally biased toward basic and acidic residues.

The protein belongs to the bacterial ribosomal protein bL32 family.

This Methylocella silvestris (strain DSM 15510 / CIP 108128 / LMG 27833 / NCIMB 13906 / BL2) protein is Large ribosomal subunit protein bL32.